A 107-amino-acid chain; its full sequence is Ferredoxin (107 aa).

Positions 1–8 (MVSGVSRN) are excised as a propeptide. The [2Fe-2S] cluster site is built by C45, C51, and C54.

The cofactor is [2Fe-2S] cluster.

The protein resides in the hydrogenosome. Ferredoxins are iron-sulfur proteins that transfer electrons in a wide variety of metabolic reactions. The polypeptide is Ferredoxin (Psalteriomonas lanterna (Amoeboflagellate)).